A 433-amino-acid chain; its full sequence is Trigger factor (433 aa).

Residues 161–246 (NDRVIIDFVG…LNKVENMILP (86 aa)) enclose the PPIase FKBP-type domain.

Belongs to the FKBP-type PPIase family. Tig subfamily.

The protein localises to the cytoplasm. The enzyme catalyses [protein]-peptidylproline (omega=180) = [protein]-peptidylproline (omega=0). Involved in protein export. Acts as a chaperone by maintaining the newly synthesized protein in an open conformation. Functions as a peptidyl-prolyl cis-trans isomerase. The chain is Trigger factor from Haemophilus ducreyi (strain 35000HP / ATCC 700724).